We begin with the raw amino-acid sequence, 162 residues long: 3-dehydroquinate dehydratase (162 aa).

Tyrosine 22 acts as the Proton acceptor in catalysis. Substrate-binding residues include asparagine 73, histidine 79, and aspartate 86. Residue histidine 99 is the Proton donor of the active site. Residues 100-101 (LS) and arginine 110 contribute to the substrate site.

It belongs to the type-II 3-dehydroquinase family. As to quaternary structure, homododecamer.

It catalyses the reaction 3-dehydroquinate = 3-dehydroshikimate + H2O. Its pathway is metabolic intermediate biosynthesis; chorismate biosynthesis; chorismate from D-erythrose 4-phosphate and phosphoenolpyruvate: step 3/7. Catalyzes a trans-dehydration via an enolate intermediate. This chain is 3-dehydroquinate dehydratase, found in Sulfurovum sp. (strain NBC37-1).